Here is a 428-residue protein sequence, read N- to C-terminus: Glutamate-1-semialdehyde 2,1-aminomutase 2 (428 aa).

Lys-267 is modified (N6-(pyridoxal phosphate)lysine).

Belongs to the class-III pyridoxal-phosphate-dependent aminotransferase family. HemL subfamily. Homodimer. It depends on pyridoxal 5'-phosphate as a cofactor.

It localises to the cytoplasm. The enzyme catalyses (S)-4-amino-5-oxopentanoate = 5-aminolevulinate. The protein operates within porphyrin-containing compound metabolism; protoporphyrin-IX biosynthesis; 5-aminolevulinate from L-glutamyl-tRNA(Glu): step 2/2. This chain is Glutamate-1-semialdehyde 2,1-aminomutase 2, found in Oceanobacillus iheyensis (strain DSM 14371 / CIP 107618 / JCM 11309 / KCTC 3954 / HTE831).